The sequence spans 135 residues: UPF0102 protein Mjls_1965 (135 aa).

The protein belongs to the UPF0102 family.

The polypeptide is UPF0102 protein Mjls_1965 (Mycobacterium sp. (strain JLS)).